We begin with the raw amino-acid sequence, 198 residues long: NAD(P)H dehydrogenase (quinone) (198 aa).

One can recognise a Flavodoxin-like domain in the interval 4–189 (VLVLYYSMYG…SIARYQGEYV (186 aa)). FMN contacts are provided by residues 10-15 (SMYGHI) and 78-80 (TRF). Residue tyrosine 12 coordinates NAD(+). Substrate is bound at residue tryptophan 98. FMN-binding positions include 113–118 (STGTGG) and histidine 133.

Belongs to the WrbA family. Requires FMN as cofactor.

The enzyme catalyses a quinone + NADH + H(+) = a quinol + NAD(+). The catalysed reaction is a quinone + NADPH + H(+) = a quinol + NADP(+). The chain is NAD(P)H dehydrogenase (quinone) from Escherichia coli O157:H7.